The primary structure comprises 325 residues: Psp operon transcriptional activator (325 aa).

Positions 15–237 constitute a Sigma-54 factor interaction domain; sequence FLEVLEQVSH…ELKNVVERSV (223 aa). Residues 36 to 43 and 99 to 108 each bind ATP; these read GERGTGKE and ADGGTLFLDE. Positions 302 to 321 form a DNA-binding region, H-T-H motif; it reads QKRAAELLGLTYHQFRALLK.

Forms a complex with PspA, which is composed of around 6 PspF subunits and 6 PspA subunits.

It is found in the cytoplasm. ATPase activity is inhibited by interaction with PspA. Under inducing conditions, the interaction is disrupted, allowing activation of psp transcription. Transcriptional activator for the phage shock protein (psp) operon (pspABCDE) and pspG gene. In Escherichia coli (strain K12), this protein is Psp operon transcriptional activator (pspF).